The primary structure comprises 339 residues: Ketol-acid reductoisomerase (NADP(+)) (339 aa).

One can recognise a KARI N-terminal Rossmann domain in the interval 1 to 182; sequence MRVYYDRDAD…GGGRSGIIET (182 aa). NADP(+)-binding positions include 24–27, R48, S51, S53, and 83–86; these read YGSQ and DELQ. H108 is a catalytic residue. G134 is a binding site for NADP(+). Residues 183-328 enclose the KARI C-terminal knotted domain; the sequence is TFREECETDL…EKLRAMMPWI (146 aa). 4 residues coordinate Mg(2+): D191, E195, E227, and E231. S252 provides a ligand contact to substrate.

Belongs to the ketol-acid reductoisomerase family. Mg(2+) is required as a cofactor.

It carries out the reaction (2R)-2,3-dihydroxy-3-methylbutanoate + NADP(+) = (2S)-2-acetolactate + NADPH + H(+). It catalyses the reaction (2R,3R)-2,3-dihydroxy-3-methylpentanoate + NADP(+) = (S)-2-ethyl-2-hydroxy-3-oxobutanoate + NADPH + H(+). Its pathway is amino-acid biosynthesis; L-isoleucine biosynthesis; L-isoleucine from 2-oxobutanoate: step 2/4. It functions in the pathway amino-acid biosynthesis; L-valine biosynthesis; L-valine from pyruvate: step 2/4. Its function is as follows. Involved in the biosynthesis of branched-chain amino acids (BCAA). Catalyzes an alkyl-migration followed by a ketol-acid reduction of (S)-2-acetolactate (S2AL) to yield (R)-2,3-dihydroxy-isovalerate. In the isomerase reaction, S2AL is rearranged via a Mg-dependent methyl migration to produce 3-hydroxy-3-methyl-2-ketobutyrate (HMKB). In the reductase reaction, this 2-ketoacid undergoes a metal-dependent reduction by NADPH to yield (R)-2,3-dihydroxy-isovalerate. This chain is Ketol-acid reductoisomerase (NADP(+)), found in Chelativorans sp. (strain BNC1).